The primary structure comprises 1193 residues: Tubulin monoglutamylase TTLL4 (1193 aa).

2 disordered regions span residues methionine 1–serine 37 and valine 468–leucine 535. Residues proline 24 to glutamate 34 are compositionally biased toward polar residues. Residues glutamine 472–aspartate 482 show a composition bias toward basic and acidic residues. Positions glutamate 502–glutamate 515 are enriched in acidic residues. In terms of domain architecture, TTL spans arginine 599 to serine 942. Serine 686 carries the phosphoserine modification. Residues lysine 716, arginine 722–glycine 723, glutamine 744–leucine 747, and lysine 757–aspartate 759 each bind ATP. Residue arginine 722 participates in a protein binding. Arginine 783 lines the L-glutamate pocket. Position 804–805 (threonine 804–asparagine 805) interacts with ATP. Positions 806, 807, and 828 each coordinate L-glutamate. Positions 888, 901, and 903 each coordinate Mg(2+). The c-MTBD region stretch occupies residues proline 913 to serine 1027. Lysine 919 contributes to the L-glutamate binding site. A compositionally biased stretch (low complexity) spans serine 943 to serine 960. Disordered stretches follow at residues serine 943–glutamine 966 and methionine 1092–serine 1193. Polar residues-rich tracts occupy residues methionine 1092–asparagine 1102 and serine 1131–lysine 1153. Positions serine 1168 to serine 1182 are enriched in low complexity. A compositionally biased stretch (polar residues) spans valine 1183 to serine 1193.

This sequence belongs to the tubulin--tyrosine ligase family. It depends on Mg(2+) as a cofactor. In terms of tissue distribution, highly expressed in testis. Expressed in brain, heart, kidney, liver, lung, muscle and spleen. In the brain, expressed in ependymal cilia, the cortex and the striatum. Expressed in blastomere.

Its subcellular location is the cytoplasm. The protein resides in the cell projection. The protein localises to the cilium. It is found in the cytoskeleton. It localises to the cilium basal body. It carries out the reaction L-glutamyl-[protein] + L-glutamate + ATP = gamma-L-glutamyl-L-glutamyl-[protein] + ADP + phosphate + H(+). Its function is as follows. Monoglutamylase which modifies both tubulin and non-tubulin proteins, adding a single glutamate on the gamma-carboxyl group of specific glutamate residues of target proteins. Involved in the side-chain initiation step of the polyglutamylation reaction but not in the elongation step. Preferentially modifies beta-tail tubulin over the alpha-tubulin. Monoglutamylates nucleosome assembly proteins NAP1L1 and NAP1L4. Monoglutamylates nucleotidyltransferase CGAS, leading to inhibition of CGAS catalytic activity, thereby preventing antiviral defense function. Involved in KLF4 glutamylation which impedes its ubiquitination, thereby leading to somatic cell reprogramming, pluripotency maintenance and embryogenesis. This Mus musculus (Mouse) protein is Tubulin monoglutamylase TTLL4.